A 143-amino-acid polypeptide reads, in one-letter code: Large ribosomal subunit protein eL28y (143 aa).

This sequence belongs to the eukaryotic ribosomal protein eL28 family.

The polypeptide is Large ribosomal subunit protein eL28y (RPL28C) (Arabidopsis thaliana (Mouse-ear cress)).